Here is a 1150-residue protein sequence, read N- to C-terminus: Solute carrier family 12 member 6 (1150 aa).

The Cytoplasmic segment spans residues 1–135 (MHPPETTTKM…DEYFDKNLAL (135 aa)). The segment at 20 to 66 (TKIDDIPGLSDTSPDLSSRSSSRVRFSSRESVPETSRSEPMSEMSGA) is disordered. Low complexity predominate over residues 28–45 (LSDTSPDLSSRSSSRVRF). A phosphoserine mark is found at Ser-32 and Ser-120. A discontinuously helical transmembrane segment spans residues 136–158 (FEEEMDTRPKVSSLLNRMANYTN). Positions 147 and 148 each coordinate K(+). Ser-148 bears the Phosphoserine mark. Asn-151 is a binding site for chloride. Residues 159–165 (LTQGAKE) are Extracellular-facing. A disordered region spans residues 161–181 (QGAKEHEEAENITEGKKKPTK). A compositionally biased stretch (basic and acidic residues) spans 163–177 (AKEHEEAENITEGKK). The chain crosses the membrane as a helical span at residues 166–188 (HEEAENITEGKKKPTKTPQMGTF). Residues 189 to 211 (MGVYLPCLQNIFGVILFLRLTWV) are Cytoplasmic-facing. The chain crosses the membrane as a helical span at residues 212–245 (VGTAGVLQAFAIVLICCCCTMLTAISMSAIATNG). The Extracellular portion of the chain corresponds to 246-263 (VVPAGGSYFMISRALGPE). 2 consecutive transmembrane segments (helical) span residues 264–287 (FGGAVGLCFYLGTTFAAAMYILGA) and 288–316 (IEIFLVYIVPRAAIFHSDDALKESAAMLN). At 317-433 (NMRVYGTAFL…FVHNNVTSIQ (117 aa)) the chain is on the extracellular side. A disulfide bond links Cys-375 and Cys-390. Asn-379, Asn-398, Asn-411, and Asn-428 each carry an N-linked (GlcNAc...) asparagine glycan. A disulfide bridge links Cys-410 with Cys-420. A helical membrane pass occupies residues 434 to 454 (GIPGLASGIITENLWSNYLPK). The K(+) site is built by Ile-443, Thr-444, and Asn-446. Chloride contacts are provided by Ile-443 and Thr-444. The chloride site is built by Leu-447 and Trp-448. Topologically, residues 455–464 (GEIIEKPSAK) are cytoplasmic. Residues 465 to 487 (SSDVLGSLNHEYVLVDITTSFTL) traverse the membrane as a helical segment. Over 488–518 (LVGIFFPSVTGIMAGSNRSGDLKDAQKSIPI) the chain is Extracellular. A helical membrane pass occupies residues 519-545 (GTILAILTTSFVYLSNVVLFGACIEGV). The Cytoplasmic portion of the chain corresponds to 546–568 (VLRDKFGDAVKGNLVVGTLSWPS). 2 helical membrane-spanning segments follow: residues 569-589 (PWVIVIGSFFSTCGAGLQSLT) and 590-612 (GAPRLLQAIAKDNIIPFLRVFGH). Ile-603 serves as a coordination point for chloride. Residues 613–629 (SKANGEPTWALLLTAAI) are Cytoplasmic-facing. Helical transmembrane passes span 630–649 (AELGILIASLDLVAPILSMF) and 650–665 (FLMCYLFVNLACALQT). At 666-1150 (LLRTPNWRPR…GGSEVITIYS (485 aa)) the chain is on the cytoplasmic side. The tract at residues 682-691 (ALSFMGMSIC) is scissor helix. Ser-736 carries the phosphoserine modification. Phosphothreonine is present on Thr-778. Ser-981 bears the Phosphoserine mark. Residue Thr-991 is modified to Phosphothreonine; by OXSR1 and STK39. Phosphoserine occurs at positions 1023, 1029, and 1032. The residue at position 1048 (Thr-1048) is a Phosphothreonine; by OXSR1 and STK39. The residue at position 1121 (Tyr-1121) is a Phosphotyrosine. The interaction with CKB stretch occupies residues 1133–1150 (ERVLLVRGGGSEVITIYS).

Belongs to the SLC12A transporter family. K/Cl co-transporter subfamily. As to quaternary structure, homodimer; adopts a domain-swap conformation at the scissor helices connecting the transmembrane domain and C-terminal domain. Heterodimer with K-Cl cotransporter SLC12A5. Interacts (via C-terminus) with CKB; the interaction may be required for potassium-chloride cotransport activity. Post-translationally, phosphorylated, phosphorylation regulates transporter activity. Phosphorylated at Thr-991 and Thr-1048 by OXSR1/OSR1 and STK39/SPAK downstream of WNK kinases (WNK1, WNK2, WNK3 or WNK4), inhibiting the potassium-chloride cotransport activity. N-glycosylated. As to expression, expressed in brain (at protein level). Highly expressed in heart, brain and kidney. Detected at lower levels in skeletal muscle, placenta, lung and pancreas. Detected in umbilical vein endothelial cells. More abundant in kidney. In terms of tissue distribution, testis specific.

Its subcellular location is the cell membrane. It is found in the basolateral cell membrane. It carries out the reaction K(+)(in) + chloride(in) = K(+)(out) + chloride(out). With respect to regulation, inhibited following phosphorylation by OXSR1/OSR1 and STK39/SPAK: phosphorylation takes place downstream of WNK kinases (WNK1, WNK2, WNK3 or WNK4) in response to hyperosmotic stress and subsequent cell shrinkage. Activated by N-ethylmaleimide (NEM). Inhibited by DIOA, bumetanide and furosemide. In terms of biological role, mediates electroneutral potassium-chloride cotransport when activated by cell swelling. May contribute to cell volume homeostasis in single cells. Functionally, mediates electroneutral potassium-chloride cotransport when activated by cell swelling. May contribute to cell volume homeostasis in single cells. Mediates electroneutral potassium-chloride cotransport when activated by cell swelling. May contribute to cell volume homeostasis in single cells. The chain is Solute carrier family 12 member 6 from Homo sapiens (Human).